We begin with the raw amino-acid sequence, 351 residues long: 7,8-didemethyl-8-hydroxy-5-deazariboflavin synthase (351 aa).

In terms of domain architecture, Radical SAM core spans 35–275 (ITYSKNAFIP…EDISIQVPPN (241 aa)). Positions 49, 53, and 56 each coordinate [4Fe-4S] cluster.

It belongs to the radical SAM superfamily. CofG family. In terms of assembly, consists of two subunits, CofG and CofH. Requires [4Fe-4S] cluster as cofactor.

The catalysed reaction is 5-amino-5-(4-hydroxybenzyl)-6-(D-ribitylimino)-5,6-dihydrouracil + S-adenosyl-L-methionine = 7,8-didemethyl-8-hydroxy-5-deazariboflavin + 5'-deoxyadenosine + L-methionine + NH4(+) + H(+). Its pathway is cofactor biosynthesis; coenzyme F0 biosynthesis. Functionally, catalyzes the radical-mediated synthesis of 7,8-didemethyl-8-hydroxy-5-deazariboflavin from 5-amino-5-(4-hydroxybenzyl)-6-(D-ribitylimino)-5,6-dihydrouracil. This chain is 7,8-didemethyl-8-hydroxy-5-deazariboflavin synthase, found in Methanococcus vannielii (strain ATCC 35089 / DSM 1224 / JCM 13029 / OCM 148 / SB).